Here is a 153-residue protein sequence, read N- to C-terminus: UPF0756 membrane protein Pjdr2_2290 (153 aa).

5 consecutive transmembrane segments (helical) span residues 6–26 (LILV…IATA), 50–70 (LELG…SGKV), 75–95 (LIAA…AVAA), 111–131 (MVVG…GIPV), and 132–152 (GPLM…LMSG).

This sequence belongs to the UPF0756 family.

It is found in the cell membrane. This chain is UPF0756 membrane protein Pjdr2_2290, found in Paenibacillus sp. (strain JDR-2).